We begin with the raw amino-acid sequence, 116 residues long: Alpha-defensin 29 (116 aa).

The first 19 residues, 1 to 19, serve as a signal peptide directing secretion; sequence MKTLVLLSALVLPCFQVQA. The propeptide occupies 20–60; the sequence is DPIQNTDEETKTEEQPEEEDQAVSVSFGGTEGSALQDVAQR. Residues 22 to 44 are disordered; the sequence is IQNTDEETKTEEQPEEEDQAVSV. Repeat copies occupy residues 65–67, 68–70, 71–73, 74–76, 77–79, 80–82, 83–85, 86–88, and 89–91. The 2 X 3 AA tandem repeats of C-R-X stretch occupies residues 65–70; it reads CRKCRV. Residues 71-79 form a 3 X 3 AA tandem repeats of C-Q-X region; that stretch reads CQKCQVCQK. The tract at residues 80-91 is 4 X 3 AA tandem repeats of C-P-X; it reads CPVCPTCPQCPK.

Belongs to the alpha-defensin family. Small bowel.

It is found in the secreted. In terms of biological role, apparent precursor of a secreted, cationic, proline- and cysteine-rich peptide that contains Cys-Pro-Xaa repeats. Unlike cryptdin, the proposed mature peptide region lacks the structural motif characteristic of defensins. The protein is Alpha-defensin 29 of Mus musculus (Mouse).